Consider the following 342-residue polypeptide: Phosphoribosylformylglycinamidine cyclo-ligase (342 aa).

Belongs to the AIR synthase family.

Its subcellular location is the cytoplasm. The catalysed reaction is 2-formamido-N(1)-(5-O-phospho-beta-D-ribosyl)acetamidine + ATP = 5-amino-1-(5-phospho-beta-D-ribosyl)imidazole + ADP + phosphate + H(+). It functions in the pathway purine metabolism; IMP biosynthesis via de novo pathway; 5-amino-1-(5-phospho-D-ribosyl)imidazole from N(2)-formyl-N(1)-(5-phospho-D-ribosyl)glycinamide: step 2/2. The protein is Phosphoribosylformylglycinamidine cyclo-ligase of Latilactobacillus sakei subsp. sakei (strain 23K) (Lactobacillus sakei subsp. sakei).